Here is a 292-residue protein sequence, read N- to C-terminus: 4-hydroxy-tetrahydrodipicolinate synthase (292 aa).

Residue Thr45 coordinates pyruvate. Residue Tyr133 is the Proton donor/acceptor of the active site. Lys162 (schiff-base intermediate with substrate) is an active-site residue. Ile204 contributes to the pyruvate binding site.

The protein belongs to the DapA family. As to quaternary structure, homotetramer; dimer of dimers.

Its subcellular location is the cytoplasm. The catalysed reaction is L-aspartate 4-semialdehyde + pyruvate = (2S,4S)-4-hydroxy-2,3,4,5-tetrahydrodipicolinate + H2O + H(+). Its pathway is amino-acid biosynthesis; L-lysine biosynthesis via DAP pathway; (S)-tetrahydrodipicolinate from L-aspartate: step 3/4. In terms of biological role, catalyzes the condensation of (S)-aspartate-beta-semialdehyde [(S)-ASA] and pyruvate to 4-hydroxy-tetrahydrodipicolinate (HTPA). The chain is 4-hydroxy-tetrahydrodipicolinate synthase from Oleidesulfovibrio alaskensis (strain ATCC BAA-1058 / DSM 17464 / G20) (Desulfovibrio alaskensis).